Consider the following 438-residue polypeptide: Putative galacturan 1,4-alpha-galacturonidase A (438 aa).

The first 21 residues, Met1–Ala21, serve as a signal peptide directing secretion. Asn28, Asn102, Asn111, and Asn197 each carry an N-linked (GlcNAc...) asparagine glycan. 2 PbH1 repeats span residues Ser186 to Arg222 and Ser223 to Gly244. Residue Asp237 is the Proton donor of the active site. Asn245, Asn253, Asn279, Asn325, Asn353, Asn372, and Asn388 each carry an N-linked (GlcNAc...) asparagine glycan. PbH1 repeat units lie at residues Ser246–Ser266, Val277–Ser303, and Val323–Thr344. A disulfide bond links Cys397 and Cys403. The N-linked (GlcNAc...) asparagine glycan is linked to Asn418.

This sequence belongs to the glycosyl hydrolase 28 family.

Its subcellular location is the secreted. The catalysed reaction is [(1-&gt;4)-alpha-D-galacturonosyl](n) + H2O = alpha-D-galacturonate + [(1-&gt;4)-alpha-D-galacturonosyl](n-1). In terms of biological role, specific in hydrolyzing the terminal glycosidic bond of polygalacturonic acid and oligogalacturonates. The protein is Putative galacturan 1,4-alpha-galacturonidase A (rgxA) of Aspergillus niger.